We begin with the raw amino-acid sequence, 417 residues long: Glutamate-1-semialdehyde 2,1-aminomutase (417 aa).

K263 carries the N6-(pyridoxal phosphate)lysine modification.

This sequence belongs to the class-III pyridoxal-phosphate-dependent aminotransferase family. HemL subfamily. Pyridoxal 5'-phosphate is required as a cofactor.

The protein localises to the cytoplasm. It carries out the reaction (S)-4-amino-5-oxopentanoate = 5-aminolevulinate. The protein operates within porphyrin-containing compound metabolism; protoporphyrin-IX biosynthesis; 5-aminolevulinate from L-glutamyl-tRNA(Glu): step 2/2. The sequence is that of Glutamate-1-semialdehyde 2,1-aminomutase from Methanospirillum hungatei JF-1 (strain ATCC 27890 / DSM 864 / NBRC 100397 / JF-1).